Reading from the N-terminus, the 260-residue chain is 14-3-3-like protein (260 aa).

The tract at residues 240–260 (DMQDDGGDEIKEAAPKPDEQY) is disordered. The segment covering 247 to 260 (DEIKEAAPKPDEQY) has biased composition (basic and acidic residues).

It belongs to the 14-3-3 family.

In Oenothera elata subsp. hookeri (Hooker's evening primrose), this protein is 14-3-3-like protein.